We begin with the raw amino-acid sequence, 174 residues long: MAAPSGRRNGSGGANLWVSLLLAAAALRPVETVSEPTTVAFDVRPGGVVHSFSQNVGPGDKYTCVFTYASQGGTNEKWQMSLGTSEDHQHFTCTIWRPQGKSYLYFTQFKAEVRGAEIEYGMAYSKAAFEKESDVPLKNEEFEVTKTAVFHRPGAFKAELSKLVIVAKATRSEL.

An N-terminal signal peptide occupies residues 1–32; it reads MAAPSGRRNGSGGANLWVSLLLAAAALRPVET.

The protein belongs to the MYDGF family.

It localises to the secreted. The protein localises to the endoplasmic reticulum-Golgi intermediate compartment. It is found in the endoplasmic reticulum. Its subcellular location is the golgi apparatus. Bone marrow-derived monocyte and paracrine-acting protein that promotes cardiac myocyte survival and adaptive angiogenesis for cardiac protection and/or repair after myocardial infarction (MI). Stimulates endothelial cell proliferation through a MAPK1/3-, STAT3- and CCND1-mediated signaling pathway. Inhibits cardiac myocyte apoptosis in a PI3K/AKT-dependent signaling pathway. The protein is Myeloid-derived growth factor of Bos taurus (Bovine).